Reading from the N-terminus, the 303-residue chain is Ornithine carbamoyltransferase (303 aa).

Carbamoyl phosphate is bound by residues 52 to 55 (STRT), Q79, R103, and 130 to 133 (HPCQ). L-ornithine contacts are provided by residues N161, D221, and 225 to 226 (SM). Carbamoyl phosphate-binding positions include 260-261 (CL) and R288.

Belongs to the aspartate/ornithine carbamoyltransferase superfamily. OTCase family.

It is found in the cytoplasm. It carries out the reaction carbamoyl phosphate + L-ornithine = L-citrulline + phosphate + H(+). It functions in the pathway amino-acid biosynthesis; L-arginine biosynthesis; L-arginine from L-ornithine and carbamoyl phosphate: step 1/3. Reversibly catalyzes the transfer of the carbamoyl group from carbamoyl phosphate (CP) to the N(epsilon) atom of ornithine (ORN) to produce L-citrulline. The chain is Ornithine carbamoyltransferase (argF) from Rhizobium meliloti (strain 1021) (Ensifer meliloti).